The sequence spans 295 residues: Phosphatidylglycerol--prolipoprotein diacylglyceryl transferase (295 aa).

The next 4 membrane-spanning stretches (helical) occupy residues 28 to 48 (WYAL…VLAT), 69 to 89 (LLTW…VLFY), 101 to 121 (ILMV…VVIA), and 131 to 151 (IPKL…LLLG). Arg-152 is an a 1,2-diacyl-sn-glycero-3-phospho-(1'-sn-glycerol) binding site. 3 consecutive transmembrane segments (helical) span residues 195–215 (QLYE…WLVW), 224–244 (GLIT…VEFF), and 268–288 (GLTM…WFVL).

The protein belongs to the Lgt family.

It is found in the cell inner membrane. The enzyme catalyses L-cysteinyl-[prolipoprotein] + a 1,2-diacyl-sn-glycero-3-phospho-(1'-sn-glycerol) = an S-1,2-diacyl-sn-glyceryl-L-cysteinyl-[prolipoprotein] + sn-glycerol 1-phosphate + H(+). It functions in the pathway protein modification; lipoprotein biosynthesis (diacylglyceryl transfer). Catalyzes the transfer of the diacylglyceryl group from phosphatidylglycerol to the sulfhydryl group of the N-terminal cysteine of a prolipoprotein, the first step in the formation of mature lipoproteins. This is Phosphatidylglycerol--prolipoprotein diacylglyceryl transferase from Ruegeria pomeroyi (strain ATCC 700808 / DSM 15171 / DSS-3) (Silicibacter pomeroyi).